A 93-amino-acid chain; its full sequence is Acylphosphatase (93 aa).

The cysteines at positions 5 and 49 are disulfide-linked. Positions 5-93 constitute an Acylphosphatase-like domain; the sequence is CIIAWVYGRV…ETLTGFSIRY (89 aa). Residues Arg20 and Asn38 contribute to the active site.

It belongs to the acylphosphatase family.

The enzyme catalyses an acyl phosphate + H2O = a carboxylate + phosphate + H(+). The polypeptide is Acylphosphatase (Salmonella typhi).